The chain runs to 911 residues: DNA ligase 4 (911 aa).

Residues Glu-271, Thr-272, Lys-273, Leu-274, Arg-278, Glu-331, Lys-345, Phe-367, Glu-427, Lys-432, Lys-449, and Lys-451 each contribute to the ATP site. The active-site N6-AMP-lysine intermediate is the Lys-273. Glu-331 is a Mg(2+) binding site. Residue Glu-427 coordinates Mg(2+). The tract at residues 610–620 (LASKHLYIGGD) is required for catalytic activity. BRCT domains are found at residues 654–743 (KISN…PRFM) and 808–911 (SPLS…QYLI).

This sequence belongs to the ATP-dependent DNA ligase family. In terms of assembly, interacts with XRCC4; the LIG4-XRCC4 subcomplex has a 1:2 stoichiometry and XRCC4 is required for LIG4 stability. Component of the core long-range non-homologous end joining (NHEJ) complex (also named DNA-PK complex) composed of PRKDC, LIG4, XRCC4, XRCC6/Ku70, XRCC5/Ku86 and NHEJ1/XLF. Additional component of the NHEJ complex includes PAXX. Following autophosphorylation, PRKDC dissociates from DNA, leading to formation of the short-range NHEJ complex, composed of LIG4, XRCC4, XRCC6/Ku70, XRCC5/Ku86 and NHEJ1/XLF. Interacts with DCLRE1C; the interaction is direct. Interacts with APLF. Requires Mg(2+) as cofactor. In terms of tissue distribution, testis, thymus, prostate and heart.

The protein resides in the nucleus. It carries out the reaction ATP + (deoxyribonucleotide)n-3'-hydroxyl + 5'-phospho-(deoxyribonucleotide)m = (deoxyribonucleotide)n+m + AMP + diphosphate.. Its function is as follows. DNA ligase involved in DNA non-homologous end joining (NHEJ); required for double-strand break (DSB) repair and V(D)J recombination. Catalyzes the NHEJ ligation step of the broken DNA during DSB repair by resealing the DNA breaks after the gap filling is completed. Joins single-strand breaks in a double-stranded polydeoxynucleotide in an ATP-dependent reaction. LIG4 is mechanistically flexible: it can ligate nicks as well as compatible DNA overhangs alone, while in the presence of XRCC4, it can ligate ends with 2-nucleotides (nt) microhomology and 1-nt gaps. Forms a subcomplex with XRCC4; the LIG4-XRCC4 subcomplex is responsible for the NHEJ ligation step and XRCC4 enhances the joining activity of LIG4. Binding of the LIG4-XRCC4 complex to DNA ends is dependent on the assembly of the DNA-dependent protein kinase complex DNA-PK to these DNA ends. LIG4 regulates nuclear localization of XRCC4. The sequence is that of DNA ligase 4 from Homo sapiens (Human).